A 368-amino-acid chain; its full sequence is WD repeat-containing protein wdr-5.1 (368 aa).

The segment at 1 to 64 (MDPAQNQPNT…APTTSQESTI (64 aa)) is disordered. Residues 16 to 42 (PAVEEAQGVNNSEAEAPAPAALSSVSP) are compositionally biased toward low complexity. WD repeat units follow at residues 77–116 (GHTK…CERT), 119–158 (GHKL…MAKT), 161–200 (GHTN…CVKT), 203–242 (AHSD…CVKT), 246–285 (DENP…TLKQ), 288–330 (GHEN…VVQS), and 333–368 (GHTQ…RSDS).

The polypeptide is WD repeat-containing protein wdr-5.1 (Caenorhabditis briggsae).